A 586-amino-acid polypeptide reads, in one-letter code: Lamin-B1 (586 aa).

The tract at residues 1 to 31 (MATATPVPPRMGSRAGGPTTPLSPTRLSRLQ) is disordered. Residue A2 is modified to N-acetylalanine. Positions 2 to 34 (ATATPVPPRMGSRAGGPTTPLSPTRLSRLQEKE) are head. T3 and T5 each carry phosphothreonine. An Omega-N-methylarginine modification is found at R14. T20 carries the phosphothreonine modification. S23 bears the Phosphoserine mark. The residue at position 25 (T25) is a Phosphothreonine. The residue at position 28 (S28) is a Phosphoserine. In terms of domain architecture, IF rod spans 32–388 (EKEELRELND…KLLEGEEERL (357 aa)). The interval 35-69 (ELRELNDRLAVYIDKVRSLETENSALQLQVTEREE) is coil 1A. Residues 70–81 (VRGRELTGLKAL) are linker 1. Positions 82–215 (YETELADARR…EFRKSMYEEE (134 aa)) are coil 1B. Residue K102 forms a Glycyl lysine isopeptide (Lys-Gly) (interchain with G-Cter in SUMO2) linkage. K111 carries the post-translational modification N6-acetyllysine. K123 participates in a covalent cross-link: Glycyl lysine isopeptide (Lys-Gly) (interchain with G-Cter in SUMO2). Position 126 is a phosphoserine (S126). Residue K145 forms a Glycyl lysine isopeptide (Lys-Gly) (interchain with G-Cter in SUMO2) linkage. K157 carries the post-translational modification N6-acetyllysine; alternate. Residue K157 forms a Glycyl lysine isopeptide (Lys-Gly) (interchain with G-Cter in SUMO2); alternate linkage. S158 is modified (phosphoserine). K181 participates in a covalent cross-link: Glycyl lysine isopeptide (Lys-Gly) (interchain with G-Cter in SUMO2). Residues S200, S210, and S232 each carry the phosphoserine modification. Residues 216–243 (INETRRKHETRLVEVDSGRQIEYEYKLA) form a linker 2 region. Residues K241 and K261 each participate in a glycyl lysine isopeptide (Lys-Gly) (interchain with G-Cter in SUMO2) cross-link. Positions 244–386 (QALHEMREQH…YRKLLEGEEE (143 aa)) are coil 2. Residue K271 is modified to N6-acetyllysine; alternate. Residue K271 forms a Glycyl lysine isopeptide (Lys-Gly) (interchain with G-Cter in SUMO2); alternate linkage. Residues S278 and S302 each carry the phosphoserine modification. K312 is covalently cross-linked (Glycyl lysine isopeptide (Lys-Gly) (interchain with G-Cter in SUMO2)). The residue at position 330 (K330) is an N6-acetyllysine; alternate. K330 participates in a covalent cross-link: Glycyl lysine isopeptide (Lys-Gly) (interchain with G-Cter in SUMO2); alternate. S375 and S393 each carry phosphoserine. Positions 387–586 (RLKLSPSPSS…RASNRSCAIM (200 aa)) are tail. Residues 388 to 432 (LKLSPSPSSRVTVSRASSSRSVRTTRGKRKRVDVEESEASSSVSI) are disordered. A compositionally biased stretch (low complexity) spans 390–409 (LSPSPSSRVTVSRASSSRSV). The O-linked (GlcNAc) threonine glycan is linked to T399. Omega-N-methylarginine is present on R413. The short motif at 415–420 (KRKRVD) is the Nuclear localization signal element. Residues 430 to 546 (VSISHSASAT…EEVAQRSTVF (117 aa)) form the LTD domain. K483 is subject to N6-acetyllysine. Residue K532 forms a Glycyl lysine isopeptide (Lys-Gly) (interchain with G-Cter in SUMO2) linkage. S534 is modified (phosphoserine). A Glycyl lysine isopeptide (Lys-Gly) (interchain with G-Cter in SUMO2) cross-link involves residue K547. Position 575 is a phosphothreonine (T575). C583 bears the Cysteine methyl ester mark. The S-farnesyl cysteine moiety is linked to residue C583. The propeptide at 584 to 586 (AIM) is removed in mature form.

It belongs to the intermediate filament family. In terms of assembly, homodimer. Lamin dimers then assemble into dimeric head-to-tail polymers. Ultimately, two head-to-tail polymers assemble laterally into a protofilament with a uniformly shaped rod of 3.5 nm in diameter. Interacts with SPAG4 and SEPT12. In terms of processing, B-type lamins undergo a series of modifications, such as farnesylation and phosphorylation. Increased phosphorylation of the lamins occurs before envelope disintegration and probably plays a role in regulating lamin associations. Post-translationally, phosphorylation plays a key role in lamin organization, subcellular localization and nuclear envelope disintegration. Phosphorylation by CDK1 at Ser-23 and Ser-393 at the onset of mitosis drives lamin disassembly and nuclear envelope breakdown.

The protein localises to the nucleus lamina. Lamins are intermediate filament proteins that assemble into a filamentous meshwork, and which constitute the major components of the nuclear lamina, a fibrous layer on the nucleoplasmic side of the inner nuclear membrane. Lamins provide a framework for the nuclear envelope, bridging the nuclear envelope and chromatin, thereby playing an important role in nuclear assembly, chromatin organization, nuclear membrane and telomere dynamics. The structural integrity of the lamina is strictly controlled by the cell cycle, as seen by the disintegration and formation of the nuclear envelope in prophase and telophase, respectively. This chain is Lamin-B1 (LMNB1), found in Homo sapiens (Human).